Reading from the N-terminus, the 245-residue chain is Probable transcriptional regulatory protein Ddes_0536 (245 aa).

Residues 1–21 form a disordered region; sequence MAGHSKWANIQHRKGRQDAKR.

The protein belongs to the TACO1 family.

The protein resides in the cytoplasm. The chain is Probable transcriptional regulatory protein Ddes_0536 from Desulfovibrio desulfuricans (strain ATCC 27774 / DSM 6949 / MB).